The following is a 360-amino-acid chain: MKNTALTNIHESLGAKMVPFAGYNMPVQYEGVNAEHEIVRTGVGVFDVSHMGEFFLKGENALALIQKVTSNDASKLVDGKAQYSCLPNNEGGIVDDLIIYKIADNHYMLVVNASNIEKDWNWISSHNDLGVDMQNLSDSYSLLAIQGPKAAEAMQSLTSIDLVNMPYYSFQIGEFAGLKDVTVSATGYTGSGGFEIYFKNEDAEAIWNKIFEAGKPFGIKPIGLAARDTLRLEMGFCLYGNDINDTTSPLEAGLGWITKFDKEFTNSANLKKQKEEGVARKLVAFEMQERAVPRHDYEIVDASGNVIGIVTSGTMSPSMNIGIGLGYVPTSFSTVDSDIFIRIRKNDVLAKVVKLPFYKK.

The protein belongs to the GcvT family. The glycine cleavage system is composed of four proteins: P, T, L and H.

The enzyme catalyses N(6)-[(R)-S(8)-aminomethyldihydrolipoyl]-L-lysyl-[protein] + (6S)-5,6,7,8-tetrahydrofolate = N(6)-[(R)-dihydrolipoyl]-L-lysyl-[protein] + (6R)-5,10-methylene-5,6,7,8-tetrahydrofolate + NH4(+). In terms of biological role, the glycine cleavage system catalyzes the degradation of glycine. The protein is Aminomethyltransferase of Flavobacterium psychrophilum (strain ATCC 49511 / DSM 21280 / CIP 103535 / JIP02/86).